A 341-amino-acid chain; its full sequence is Serpentine receptor class alpha-28 (341 aa).

The next 7 membrane-spanning stretches (helical) occupy residues 25–45 (FIIS…RVLL), 57–77 (LLFS…VIRL), 107–129 (YYYT…LFSF), 142–162 (ASIV…YWVF), 188–208 (VNNI…FLYI), 242–262 (IVIF…SVFI), and 275–295 (LIIS…LIIL).

This sequence belongs to the nematode receptor-like protein sra family.

The protein resides in the membrane. The chain is Serpentine receptor class alpha-28 (sra-28) from Caenorhabditis elegans.